The following is a 772-amino-acid chain: Transcription factor sdnS (772 aa).

The segment at residues 23–53 (CWECRRRKIRCQFGAGNDTVCLPCQARGSTC) is a DNA-binding region (zn(2)-C6 fungal-type). Disordered stretches follow at residues 94–121 (EAGG…SAQN) and 156–180 (ASML…NSKT). Residues 100-121 (ANRSTTQSNRGSRSPSPDSAQN) show a composition bias toward polar residues.

It is found in the nucleus. It participates in antibiotic biosynthesis. Functionally, transcription factor; part of the gene cluster that mediates the biosynthesis of sordarin and hypoxysordarin, glycoside antibiotics with a unique tetracyclic diterpene aglycone structure. First, the geranylgeranyl diphosphate synthase sdnC constructs GGDP from farnesyl diphosphate and isopentenyl diphosphate. The diterpene cyclase sdnA then catalyzes the cyclization of GGDP to afford cycloaraneosene. Cycloaraneosene is then hydroxylated four times by the putative cytochrome P450 monooxygenases sdnB, sdnE, sdnF and sdnH to give a hydroxylated cycloaraneosene derivative such as cycloaraneosene-8,9,13,19-tetraol. Although the order of the hydroxylations is unclear, at least C8, C9 and C13 of the cycloaraneosene skeleton are hydroxylated before the sordaricin formation. Dehydration of the 13-hydroxy group of the hydroxylated cycloaraneosene derivative might be catalyzed by an unassigned hypothetical protein such as sdnG and sdnP to construct the cyclopentadiene moiety. The FAD-dependent oxidoreductase sdnN is proposed to catalyze the oxidation at C9 of the hydroxylated cycloaraneosene derivative and also catalyze the Baeyer-Villiger oxidation to give the lactone intermediate. The presumed lactone intermediate would be hydrolyzed to give an acrolein moiety and a carboxylate moiety. Then, [4+2]cycloaddition would occur between the acrolein moiety and the cyclopentadiene moiety to give sordaricin. SdnN might also be involved in the [4+2]cycloaddition after the hypothesized oxidation to accommodate the oxidized product and prompt the [4+2]cycloaddition. GDP-6-deoxy-D-altrose may be biosynthesized from GDP-D-mannose by the putative GDP-mannose-4,6-dehydratase sdnI and the short-chain dehydrogenase sdnK. The glycosyltransferase sdnJ catalyzes the attachment of 6-deoxy-D-altrose onto the 19-hydroxy group of sordaricin to give 4'-O-demethylsordarin. The methyltransferase sdnD would complete the biosynthesis of sordarin. Sordarin can be further modified into hypoxysordarin. The unique acyl chain at the 3'-hydroxy group of hypoxysordarin would be constructed by an iterative type I PKS sdnO and the trans-acting polyketide methyltransferase sdnL. SdnL would be responsible for the introduction of an alpha-methyl group of the polyketide chain. Alternatively, the beta-lactamase-like protein sdnR might be responsible for the cleavage and transfer of the polyketide chain from the PKS sdnO to sordarin. Two putative cytochrome P450 monooxygenases, sdnQ and sdnT, might catalyze the epoxidations of the polyketide chain to complete the biosynthesis of hypoxysordarin. Transcriptional regulators sdnM and sdnS are presumably encoded for the transcriptional regulation of the expression of the sdn gene cluster. This Sordaria araneosa (Pleurage araneosa) protein is Transcription factor sdnS.